We begin with the raw amino-acid sequence, 540 residues long: CUB domain-containing protein 2 (540 aa).

An N-terminal signal peptide occupies residues 1–22 (MLAEWGACLLLAVALLGPGLQA). Residues 23–516 (QAMEGVKCGG…VSMVAQDTSD (494 aa)) are Extracellular-facing. Disulfide bonds link cysteine 30–cysteine 56, cysteine 83–cysteine 106, cysteine 145–cysteine 171, cysteine 198–cysteine 218, cysteine 257–cysteine 283, and cysteine 314–cysteine 336. CUB domains lie at 30–143 (CGGV…YQKD), 145–255 (CGGV…YFSG), and 257–373 (CQEV…YIGV). Asparagine 40 carries N-linked (GlcNAc...) asparagine glycosylation. Residue asparagine 267 is glycosylated (N-linked (GlcNAc...) asparagine). 3 N-linked (GlcNAc...) asparagine glycosylation sites follow: asparagine 377, asparagine 435, and asparagine 436. The chain crosses the membrane as a helical span at residues 517 to 537 (IVFLGLCILAGILMVIAIVVL). At 538–540 (MLL) the chain is on the cytoplasmic side.

Its subcellular location is the membrane. The polypeptide is CUB domain-containing protein 2 (CDCP2) (Homo sapiens (Human)).